Consider the following 412-residue polypeptide: Acetylornithine aminotransferase (412 aa).

Residues 109-110 (GA) and phenylalanine 142 each bind pyridoxal 5'-phosphate. Arginine 145 lines the N(2)-acetyl-L-ornithine pocket. Residue 233-236 (DEVQ) participates in pyridoxal 5'-phosphate binding. Lysine 262 bears the N6-(pyridoxal phosphate)lysine mark. N(2)-acetyl-L-ornithine is bound at residue serine 289. Position 290 (threonine 290) interacts with pyridoxal 5'-phosphate.

This sequence belongs to the class-III pyridoxal-phosphate-dependent aminotransferase family. ArgD subfamily. In terms of assembly, homodimer. Pyridoxal 5'-phosphate serves as cofactor.

The protein resides in the cytoplasm. The catalysed reaction is N(2)-acetyl-L-ornithine + 2-oxoglutarate = N-acetyl-L-glutamate 5-semialdehyde + L-glutamate. It functions in the pathway amino-acid biosynthesis; L-arginine biosynthesis; N(2)-acetyl-L-ornithine from L-glutamate: step 4/4. This is Acetylornithine aminotransferase from Thermosynechococcus vestitus (strain NIES-2133 / IAM M-273 / BP-1).